Consider the following 78-residue polypeptide: D-alanyl carrier protein (78 aa).

Residues 1-78 (MAFRENVLEI…MIITQLEALK (78 aa)) form the Carrier domain. At serine 36 the chain carries O-(pantetheine 4'-phosphoryl)serine.

The protein belongs to the DltC family. In terms of processing, 4'-phosphopantetheine is transferred from CoA to a specific serine of apo-DCP.

It localises to the cytoplasm. Its pathway is cell wall biogenesis; lipoteichoic acid biosynthesis. Carrier protein involved in the D-alanylation of lipoteichoic acid (LTA). The loading of thioester-linked D-alanine onto DltC is catalyzed by D-alanine--D-alanyl carrier protein ligase DltA. The DltC-carried D-alanyl group is further transferred to cell membrane phosphatidylglycerol (PG) by forming an ester bond, probably catalyzed by DltD. D-alanylation of LTA plays an important role in modulating the properties of the cell wall in Gram-positive bacteria, influencing the net charge of the cell wall. The chain is D-alanyl carrier protein from Listeria monocytogenes serotype 4b (strain CLIP80459).